We begin with the raw amino-acid sequence, 67 residues long: Large ribosomal subunit protein uL29 (67 aa).

The protein belongs to the universal ribosomal protein uL29 family.

The polypeptide is Large ribosomal subunit protein uL29 (Zymomonas mobilis subsp. mobilis (strain ATCC 31821 / ZM4 / CP4)).